The primary structure comprises 312 residues: Zinc finger protein 414 (312 aa).

The disordered stretch occupies residues 1 to 110 (MEEKPSGPIP…RRPPPGKQIP (110 aa)). The span at 29 to 48 (SPAVPAAAPSSSMSEEPGPE) shows a compositional bias: low complexity. Polar residues predominate over residues 84–93 (GLTSIVSGTS). 3 C2H2-type zinc fingers span residues 109–133 (IPCS…LRTH), 145–169 (FRCS…SKLH), and 176–201 (FKCE…CAEH). The interval 203-312 (QSPAPPPPPA…GSDAPSGACR (110 aa)) is disordered. Positions 213-225 (LDREPPAPERPPE) are enriched in basic and acidic residues. Low complexity-rich tracts occupy residues 227 to 243 (DPAS…EPFT) and 265 to 285 (SPPR…SSAA).

Belongs to the krueppel C2H2-type zinc-finger protein family.

It is found in the nucleus. May be involved in transcriptional regulation. The sequence is that of Zinc finger protein 414 (ZNF414) from Homo sapiens (Human).